The primary structure comprises 384 residues: uncharacterized protein (384 aa).

10 consecutive transmembrane segments (helical) span residues 11–31, 33–53, 66–86, 94–114, 153–173, 197–217, 224–244, 284–304, 309–329, and 342–362; these read LWFI…GISI, WMIG…AWLM, LALG…LSVL, FSVG…GYVL, LVQM…VILI, LAPV…CKAA, APWL…GAAV, IIIV…LSAV, LTGI…IAEM, and FVVA…PPFY.

This sequence belongs to the AbrB family.

Its subcellular location is the cell membrane. This is an uncharacterized protein from Bacillus subtilis (strain 168).